Here is a 542-residue protein sequence, read N- to C-terminus: Calcium-dependent protein kinase 15 (542 aa).

The disordered stretch occupies residues 1 to 73; it reads MGARASRHRQ…QAPQQAAAED (73 aa). Glycine 2 is lipidated: N-myristoyl glycine. Over residues 12–21 the composition is skewed to low complexity; the sequence is PDQSQSQSPS. The span at 22–40 shows a compositional bias: basic residues; it reads PHHKHHHHHQTTRAPKPKP. Pro residues predominate over residues 41–60; the sequence is KPQPPPPQQPRSQPPPPPRH. Positions 61–71 are enriched in low complexity; sequence QPQQAPQQAAA. The Protein kinase domain maps to 90–348; it reads YTFGRELGRG…AAEILNHPWI (259 aa). Residues 96 to 104 and lysine 119 each bind ATP; that span reads LGRGQFGVT. Aspartate 214 (proton acceptor) is an active-site residue. Residues 354–384 are autoinhibitory domain; the sequence is APDKPLDITVISRMKQFRAMNKLKKVALKVV. EF-hand domains lie at 391–426, 427–462, 463–497, and 498–533; these read EEIVGLKEMFKSLDTDNSGTITLEELRAGLPKLGTK, ISESELRQLMEAADVDGNGSIDYVEFISATMHMNRL, EKEDHIYKAFEYFDKDHSGFITVDELEEALTKYDM, and GDEATIKEIIAEVDTDHDGRINYQEFVAMMKNNSPE. 19 residues coordinate Ca(2+): aspartate 404, aspartate 406, serine 408, threonine 410, glutamate 415, aspartate 440, aspartate 442, asparagine 444, serine 446, glutamate 451, aspartate 476, aspartate 478, serine 480, glutamate 487, aspartate 511, aspartate 513, aspartate 515, arginine 517, and glutamate 522.

This sequence belongs to the protein kinase superfamily. Ser/Thr protein kinase family. CDPK subfamily.

It localises to the membrane. It catalyses the reaction L-seryl-[protein] + ATP = O-phospho-L-seryl-[protein] + ADP + H(+). The enzyme catalyses L-threonyl-[protein] + ATP = O-phospho-L-threonyl-[protein] + ADP + H(+). Activated by calcium. Autophosphorylation may play an important role in the regulation of the kinase activity. May play a role in signal transduction pathways that involve calcium as a second messenger. This is Calcium-dependent protein kinase 15 from Oryza sativa subsp. japonica (Rice).